The primary structure comprises 428 residues: Serine--tRNA ligase (428 aa).

Position 235–237 (235–237 (TAE)) interacts with L-serine. 266 to 268 (RSE) serves as a coordination point for ATP. Position 289 (Glu-289) interacts with L-serine. 353–356 (EISS) lines the ATP pocket. An L-serine-binding site is contributed by Ser-389.

Belongs to the class-II aminoacyl-tRNA synthetase family. Type-1 seryl-tRNA synthetase subfamily. In terms of assembly, homodimer. The tRNA molecule binds across the dimer.

Its subcellular location is the cytoplasm. It carries out the reaction tRNA(Ser) + L-serine + ATP = L-seryl-tRNA(Ser) + AMP + diphosphate + H(+). It catalyses the reaction tRNA(Sec) + L-serine + ATP = L-seryl-tRNA(Sec) + AMP + diphosphate + H(+). The protein operates within aminoacyl-tRNA biosynthesis; selenocysteinyl-tRNA(Sec) biosynthesis; L-seryl-tRNA(Sec) from L-serine and tRNA(Sec): step 1/1. In terms of biological role, catalyzes the attachment of serine to tRNA(Ser). Is also able to aminoacylate tRNA(Sec) with serine, to form the misacylated tRNA L-seryl-tRNA(Sec), which will be further converted into selenocysteinyl-tRNA(Sec). In Shewanella piezotolerans (strain WP3 / JCM 13877), this protein is Serine--tRNA ligase.